Here is a 95-residue protein sequence, read N- to C-terminus: MNLRPLHDRVIVKRQEEEKVSAGGIVLPGSAAEKPSQGEVIAVGEGKLLENGERRKMAVKAGDKILFGKYTGSEVKVDGVDYIIMREDEIFAVIE.

It belongs to the GroES chaperonin family. As to quaternary structure, heptamer of 7 subunits arranged in a ring. Interacts with the chaperonin GroEL.

Its subcellular location is the cytoplasm. Functionally, together with the chaperonin GroEL, plays an essential role in assisting protein folding. The GroEL-GroES system forms a nano-cage that allows encapsulation of the non-native substrate proteins and provides a physical environment optimized to promote and accelerate protein folding. GroES binds to the apical surface of the GroEL ring, thereby capping the opening of the GroEL channel. In Dichelobacter nodosus (strain VCS1703A), this protein is Co-chaperonin GroES.